Reading from the N-terminus, the 752-residue chain is Photosystem I P700 chlorophyll a apoprotein A1 (752 aa).

Transmembrane regions (helical) follow at residues 73–96 (IFAA…FHGA), 159–182 (LYVT…FHYH), 198–222 (LNHH…HVSA), 294–312 (ISHH…GHMY), 349–372 (WHAQ…HHMY), 388–414 (LCIF…IFMV), 436–458 (AIIS…LYVH), and 533–551 (FLVH…LILL). 2 residues coordinate [4Fe-4S] cluster: Cys575 and Cys584. 2 consecutive transmembrane segments (helical) span residues 591–612 (HVFL…HFSW) and 666–688 (LSAY…MFLF). His677 is a chlorophyll a' binding site. Chlorophyll a-binding residues include Met685 and Tyr693. Trp694 contributes to the phylloquinone binding site. A helical membrane pass occupies residues 726-746 (AVGVAHYLLGGIATTWAFFHA).

This sequence belongs to the PsaA/PsaB family. As to quaternary structure, the PsaA/B heterodimer binds the P700 chlorophyll special pair and subsequent electron acceptors. PSI consists of a core antenna complex that captures photons, and an electron transfer chain that converts photonic excitation into a charge separation. The cyanobacterial PSI reaction center is composed of one copy each of PsaA,B,C,D,E,F,I,J,K,L,M and X, and forms trimeric complexes. PSI electron transfer chain: 5 chlorophyll a, 1 chlorophyll a', 2 phylloquinones and 3 4Fe-4S clusters. PSI core antenna: 90 chlorophyll a, 22 carotenoids, 3 phospholipids and 1 galactolipid. P700 is a chlorophyll a/chlorophyll a' dimer, A0 is one or more chlorophyll a, A1 is one or both phylloquinones and FX is a shared 4Fe-4S iron-sulfur center. serves as cofactor.

The protein resides in the cellular thylakoid membrane. The catalysed reaction is reduced [plastocyanin] + hnu + oxidized [2Fe-2S]-[ferredoxin] = oxidized [plastocyanin] + reduced [2Fe-2S]-[ferredoxin]. Functionally, psaA and PsaB bind P700, the primary electron donor of photosystem I (PSI), as well as the electron acceptors A0, A1 and FX. PSI is a plastocyanin/cytochrome c6-ferredoxin oxidoreductase, converting photonic excitation into a charge separation, which transfers an electron from the donor P700 chlorophyll pair to the spectroscopically characterized acceptors A0, A1, FX, FA and FB in turn. Oxidized P700 is reduced on the lumenal side of the thylakoid membrane by plastocyanin or cytochrome c6. The protein is Photosystem I P700 chlorophyll a apoprotein A1 of Mastigocladus laminosus (Fischerella sp.).